A 439-amino-acid chain; its full sequence is Alpha-1,3-mannosyl-glycoprotein 4-beta-N-acetylglucosaminyltransferase-like protein MGAT4E (439 aa).

Its pathway is protein modification; protein glycosylation. Functionally, glycosyltransferase-like protein that may participate in the transfer of N-acetylglucosamine (GlcNAc) to the core mannose residues of N-linked glycans. The protein is Alpha-1,3-mannosyl-glycoprotein 4-beta-N-acetylglucosaminyltransferase-like protein MGAT4E of Mus musculus (Mouse).